The primary structure comprises 307 residues: MNRFIDLSEEVKSALEERRPVVALESTIISHGMPYPQNIETARALEEIVRENGAVPATIAIIGGKIKIGLNEEELEFMGTSKEILKASKRDLPVVLAKGLNAATTVSATMICANLAGIKVFVTGGIGGVHRGAEETFDISADLQELANTNVAVVCAGAKAILDLPRTLEYLETFGVPVIGFRTEEFPAFYTRESGLKVDYRVEDEVEAAKVIKTKWDLGLKGGILIANPIPEEYALDRAYIEKAIEEAIFEADRRGIRGKALTPFLLEKIKDLTEGKSLKANIELVKNNARVGAKIAVQLNKLYKEA.

E25 (proton donor) is an active-site residue. Substrate contacts are provided by K86 and V106. Residue D138 participates in Mn(2+) binding. Position 140–142 (140–142 (SAD)) interacts with substrate. K159 (nucleophile) is an active-site residue.

The protein belongs to the pseudouridine-5'-phosphate glycosidase family. In terms of assembly, homotrimer. Requires Mn(2+) as cofactor.

The catalysed reaction is D-ribose 5-phosphate + uracil = psi-UMP + H2O. Its function is as follows. Catalyzes the reversible cleavage of pseudouridine 5'-phosphate (PsiMP) to ribose 5-phosphate and uracil. Functions biologically in the cleavage direction, as part of a pseudouridine degradation pathway. This chain is Pseudouridine-5'-phosphate glycosidase, found in Caldanaerobacter subterraneus subsp. tengcongensis (strain DSM 15242 / JCM 11007 / NBRC 100824 / MB4) (Thermoanaerobacter tengcongensis).